The sequence spans 341 residues: Transcription factor JunD (341 aa).

A disordered region spans residues 21–49; sequence VAGAAGAPGGGGFAPPGRAFPGAPPTSSM. The Menin-binding motif (MBM) signature appears at 35–47; sequence PPGRAFPGAPPTS. Positions 51-60 match the MAP kinase docking motif; essential for its phosphorylation motif; sequence KKDALTLSLA. The tract at residues 65-85 is disordered; the sequence is AGLKPGSATAPSALRPDGAPD. Ser-90 is subject to Phosphoserine. At Ser-100 the chain carries Phosphoserine; by MAPK8. Thr-117 bears the Phosphothreonine mark. The segment at 155–176 is disordered; that stretch reads AATAATSGAPAPPAPADLAATP. A phosphoserine mark is found at Ser-245, Ser-249, and Ser-253. A basic motif region spans residues 262 to 289; that stretch reads RIKAERKRLRNRIAASKCRKRKLERISR. A bZIP domain is found at 262-325; it reads RIKAERKRLR…AQLKQKVLSH (64 aa). Residues 290-318 form a leucine-zipper region; it reads LEEKVKTLKSQNTELASTASLLREQVAQL.

The protein belongs to the bZIP family. Jun subfamily. In terms of assembly, heterodimer; binds DNA as a heterodimer. Component of an AP-1 transcription factor complex composed of JUN-FOS heterodimers. As part of the AP-1 transcription factor complex, forms heterodimers with FOS proteins, thereby binding to the AP-1 consensus sequence and stimulating transcription. Forms heterodimers with FOSB; thereby binding to the AP-1 consensus sequence. Interacts (via MBM motif) with MEN1; this interaction represses transcriptional activation. Interacts with MAPK10; this interaction is inhibited in the presence of MEN1. Post-translationally, phosphorylated by MAP kinases MAPK8 and MAPK10; phosphorylation is inhibited in the presence of MEN1.

Its subcellular location is the nucleus. Its function is as follows. Transcription factor binding AP-1 sites. Heterodimerizes with proteins of the FOS family to form an AP-1 transcription factor complex, thereby enhancing their DNA binding activity to an AP-1 consensus sequence 3'-TGA[GC]TCA-5' and enhancing their transcriptional activity. This Rattus norvegicus (Rat) protein is Transcription factor JunD (Jund).